The following is a 332-amino-acid chain: MILEHKQMIYTIIIGFFITLILGPLIIPFLKKLKVGQTVREEGPRSHLQKTGTPTIGGLIIIASVLVTSFTAGLINQDLWVAIGAMVAFGLIGFIDDFIKVVLKRSLGLRAYQKMSLQIIVAVFLAIYQSNISVMGTKIIVPFVKGSLTLGSFTIPQYLDLGILYIPFIVFVVVATVNSVNLTDGLDGLASGVTLIVAAFFSILAMEWGYPSLAIFAAAVTGSCLGFLRFNSHPAQVFMGDTGSLALGGAISAVAILMNVALIVPIVGGIYFAEALSVILQVISFKLTGKRIFKMSPLHHHYELSGWAETKVVIVFWIVTVILCLIGMLGLN.

The next 8 helical transmembrane spans lie at 9 to 29 (IYTIIIGFFITLILGPLIIPF), 55 to 75 (TIGGLIIIASVLVTSFTAGLI), 79 to 99 (LWVAIGAMVAFGLIGFIDDFI), 115 to 135 (MSLQIIVAVFLAIYQSNISVM), 155 to 175 (IPQYLDLGILYIPFIVFVVVA), 196 to 216 (IVAAFFSILAMEWGYPSLAIF), 253 to 273 (AVAILMNVALIVPIVGGIYFA), and 312 to 332 (VVIVFWIVTVILCLIGMLGLN).

This sequence belongs to the glycosyltransferase 4 family. MraY subfamily. It depends on Mg(2+) as a cofactor.

Its subcellular location is the cell membrane. The enzyme catalyses UDP-N-acetyl-alpha-D-muramoyl-L-alanyl-gamma-D-glutamyl-meso-2,6-diaminopimeloyl-D-alanyl-D-alanine + di-trans,octa-cis-undecaprenyl phosphate = di-trans,octa-cis-undecaprenyl diphospho-N-acetyl-alpha-D-muramoyl-L-alanyl-D-glutamyl-meso-2,6-diaminopimeloyl-D-alanyl-D-alanine + UMP. The protein operates within cell wall biogenesis; peptidoglycan biosynthesis. Functionally, catalyzes the initial step of the lipid cycle reactions in the biosynthesis of the cell wall peptidoglycan: transfers peptidoglycan precursor phospho-MurNAc-pentapeptide from UDP-MurNAc-pentapeptide onto the lipid carrier undecaprenyl phosphate, yielding undecaprenyl-pyrophosphoryl-MurNAc-pentapeptide, known as lipid I. This chain is Phospho-N-acetylmuramoyl-pentapeptide-transferase, found in Alkaliphilus oremlandii (strain OhILAs) (Clostridium oremlandii (strain OhILAs)).